The sequence spans 509 residues: Diacylglycerol kinase 5 (509 aa).

The 152-residue stretch at 36-187 folds into the DAGKc domain; it reads TPASPVLVFI…IDNWHILMRM (152 aa). Over residues 439-452 the composition is skewed to basic and acidic residues; the sequence is RSVFDPSTPRHQDG. The segment at 439 to 509 is disordered; it reads RSVFDPSTPR…SNVHGWSHVL (71 aa). The span at 453-467 shows a compositional bias: acidic residues; the sequence is AEDYDDNEDDSVAEG. Basic and acidic residues predominate over residues 468-489; that stretch reads EEFRKFGAADTFKIPDEGEHSN. Residues 490 to 500 show a composition bias toward basic residues; it reads KKGRASRRRNS.

This sequence belongs to the eukaryotic diacylglycerol kinase family. As to quaternary structure, monomer.

The enzyme catalyses a 1,2-diacyl-sn-glycerol + ATP = a 1,2-diacyl-sn-glycero-3-phosphate + ADP + H(+). Phosphorylates the second messenger diacylglycerol (DAG) to generate phosphatidic acid (PA), another important signaling molecule. PA is required for plant development and responses to abiotic stress and pathogen attack. May be involved in the accumulation of PA during cold stress. In Arabidopsis thaliana (Mouse-ear cress), this protein is Diacylglycerol kinase 5 (DGK5).